An 84-amino-acid chain; its full sequence is Large ribosomal subunit protein bL27 (84 aa).

The disordered stretch occupies residues 1-25 (MSHKKAGGSTRNGRDSNAQRRGVKK).

The protein belongs to the bacterial ribosomal protein bL27 family.

In Desulforapulum autotrophicum (strain ATCC 43914 / DSM 3382 / VKM B-1955 / HRM2) (Desulfobacterium autotrophicum), this protein is Large ribosomal subunit protein bL27.